Consider the following 793-residue polypeptide: Ribosome biogenesis protein BOP1 homolog (793 aa).

A compositionally biased stretch (basic residues) spans 1–11 (MTKKLTLKRKG). The disordered stretch occupies residues 1–168 (MTKKLTLKRK…DSDTSDEEDI (168 aa)). Composition is skewed to acidic residues over residues 44–53 (EDTTDDEGID), 60–72 (SSED…DEEG), and 83–116 (SSEE…DGDE). A compositionally biased stretch (basic and acidic residues) spans 117 to 129 (EKPTTSKQNKSED). Over residues 133–143 (SSKVSKKTQPP) the composition is skewed to polar residues. Basic and acidic residues predominate over residues 146 to 161 (DLVKRDPSHPEYHDSD). WD repeat units lie at residues 454–495 (GHTD…RTIE), 497–535 (EDVV…KVLV), 579–621 (NHFK…SQIP), 624–662 (KSKG…LVKK), 665–704 (TNSK…KPYQ), 708–747 (LHRN…DLLQ), and 763–793 (REDF…RLYT).

It belongs to the WD repeat BOP1/ERB1 family.

The protein resides in the nucleus. Its subcellular location is the nucleolus. It localises to the nucleoplasm. Functionally, required for maturation of ribosomal RNAs and formation of the large ribosomal subunit. In Drosophila ananassae (Fruit fly), this protein is Ribosome biogenesis protein BOP1 homolog.